We begin with the raw amino-acid sequence, 299 residues long: Glycine--tRNA ligase alpha subunit (299 aa).

This sequence belongs to the class-II aminoacyl-tRNA synthetase family. In terms of assembly, tetramer of two alpha and two beta subunits.

It is found in the cytoplasm. It catalyses the reaction tRNA(Gly) + glycine + ATP = glycyl-tRNA(Gly) + AMP + diphosphate. The polypeptide is Glycine--tRNA ligase alpha subunit (Desulforapulum autotrophicum (strain ATCC 43914 / DSM 3382 / VKM B-1955 / HRM2) (Desulfobacterium autotrophicum)).